We begin with the raw amino-acid sequence, 1043 residues long: MPLLEGSVGVEDLVLLEPLVEESLLKNLQLRYENKEIYTYIGNVVISVNPYQQLPIYGPEFIAKYQDYTFYELKPHIYALANVAYQSLRDRDRDQCILITGESGSGKTEASKLVMSYVAAVCGKGEQVNSVKEQLLQSNPVLEAFGNAKTIRNNNSSRFGKYMDIEFDFKGSPLGGVITNYLLEKSRLVKQLKGERNFHIFYQLLAGADEQLLKALKLERDTTGYAYLNHEVSRVDGMDDASSFRAVQSAMAVIGFSEEEIRQVLEVTSMVLKLGNVLVADEFQASGIPASGIRDGRGVREIGEMVGLNSEEVERALCSRTMETAKEKVVTALNVMQAQYARDALAKNIYSRLFDWIVNRINESIKVGIGEKKKVMGVLDIYGFEILEDNSFEQFVINYCNEKLQQVFIEMTLKEEQEEYKREGIPWTKVDYFDNGIICKLIEHNQRGILAMLDEECLRPGVVSDSTFLAKLNQLFSKHGHYESKVTQNAQRQYDHTMGLSCFRICHYAGKVTYNVTSFIDKNNDLLFRDLLQAMWKAQHPLLRSLFPEGNPKQASLKRPPTAGAQFKSSVAILMKNLYSKSPNYIRCIKPNEHQQRGQFSSDLVATQARYLGLLENVRVRRAGYAHRQGYGPFLERYRLLSRSTWPHWNGGDREGVEKVLGELSMSSGELAFGKTKIFIRSPKTLFYLEEQRRLRLQQLATLIQKIYRGWRCRTHYQLMRKSQILISSWFRGNMQKKCYGKIKASVLLIQAFVRGWKARKNYRKYFRSEAALTLADFIYKSMVQKFLLGLKNNLPSTNVLDKTWPAAPYKCLSTANQELQQLFYQWKCKRFRDQLSPKQVEILREKLCASELFKGKKASYPQSVPIPFCGDYIGLQGNPKLQKLKGGEEGPVLMAEAVKKVNRGNGKTSSRILLLTKGHVILTDTKKSQAKIVIGLDNVAGVSVTSLKDGLFSLHLSEMSSVGSKGDFLLVSEHVIELLTKMYRAVLDATQRQLTVTVTEKFSVRFKENSVAVKVVQGPAGGDNSKLRYKKKGSHCLEVTVQ.

One can recognise a Myosin motor domain in the interval 8 to 694; it reads VGVEDLVLLE…TLFYLEEQRR (687 aa). Residue 101–108 participates in ATP binding; that stretch reads GESGSGKT. Residues 571 to 593 form an actin-binding region; that stretch reads VAILMKNLYSKSPNYIRCIKPNE. IQ domains are found at residues 697 to 719, 720 to 742, and 743 to 772; these read LQQL…HYQL, MRKS…CYGK, and IKAS…SEAA. One can recognise a TH1 domain in the interval 858 to 1042; it reads KASYPQSVPI…KGSHCLEVTV (185 aa).

This sequence belongs to the TRAFAC class myosin-kinesin ATPase superfamily. Myosin family. Post-translationally, phosphorylated by ALPK1.

In terms of biological role, involved in directing the movement of organelles along actin filaments. This chain is Unconventional myosin-Ia (MYO1A), found in Homo sapiens (Human).